Consider the following 273-residue polypeptide: MNTRVHQGHLARKRFGQNFLNDQFVIESIVSAINPQKGQAMVEIGPGLAALTEPVGERLDEMTVIELDRDLAARLKTHPFLGPKLTIYQQDAMTMNFAELSEKLGQPLRVFGNLPYNISTPLMFHLFSYTDAIADMHFMLQKEVVNRLVAGPNSKAYGRLSVMAQYYCQIIPVLEVPPTAFTPAPKVESAVVRLVPHAVMPHPVKELRVLSRITTEAFNQRRKTIRNSLGNTFTVDVLTELGIDPAMRAENISVEQYCKLANYISDNAPPKES.

Residues Asn-18, Leu-20, Gly-45, Glu-66, Asp-91, and Asn-113 each contribute to the S-adenosyl-L-methionine site.

It belongs to the class I-like SAM-binding methyltransferase superfamily. rRNA adenine N(6)-methyltransferase family. RsmA subfamily.

It localises to the cytoplasm. The enzyme catalyses adenosine(1518)/adenosine(1519) in 16S rRNA + 4 S-adenosyl-L-methionine = N(6)-dimethyladenosine(1518)/N(6)-dimethyladenosine(1519) in 16S rRNA + 4 S-adenosyl-L-homocysteine + 4 H(+). Functionally, specifically dimethylates two adjacent adenosines (A1518 and A1519) in the loop of a conserved hairpin near the 3'-end of 16S rRNA in the 30S particle. May play a critical role in biogenesis of 30S subunits. In Enterobacter sp. (strain 638), this protein is Ribosomal RNA small subunit methyltransferase A.